The following is a 315-amino-acid chain: Probable cell division protein WhiA (315 aa).

Residues 275–309 constitute a DNA-binding region (H-T-H motif); it reads NLKELGEMVPSGVVSKSGINHRLRKINEIADKIRE.

Belongs to the WhiA family.

Functionally, involved in cell division and chromosome segregation. The sequence is that of Probable cell division protein WhiA from Brevibacillus brevis (strain 47 / JCM 6285 / NBRC 100599).